The primary structure comprises 337 residues: GTPase Obg (337 aa).

The region spanning 1–161 is the Obg domain; the sequence is MNLTDNAVIF…FKIKLDFVFL (161 aa). The region spanning 162 to 333 is the OBG-type G domain; sequence ADVGLFGYSN…LINKILLFLE (172 aa). Residues 168–175, 193–197, 214–217, 282–285, and 314–316 each bind GTP; these read GYSNTGRS, FTTLF, DIPS, NKTD, and SLN. 2 residues coordinate Mg(2+): Ser175 and Thr195.

The protein belongs to the TRAFAC class OBG-HflX-like GTPase superfamily. OBG GTPase family. As to quaternary structure, monomer. Mg(2+) serves as cofactor.

Its subcellular location is the cytoplasm. In terms of biological role, an essential GTPase which binds GTP, GDP and possibly (p)ppGpp with moderate affinity, with high nucleotide exchange rates and a fairly low GTP hydrolysis rate. Plays a role in control of the cell cycle, stress response, ribosome biogenesis and in those bacteria that undergo differentiation, in morphogenesis control. In Wigglesworthia glossinidia brevipalpis, this protein is GTPase Obg.